We begin with the raw amino-acid sequence, 329 residues long: Alternative oxidase, mitochondrial (329 aa).

A helical membrane pass occupies residues Val-115 to Met-135. The Fe cation site is built by Glu-123, Glu-162, and His-165. The helical transmembrane segment at Val-181 to Ser-201 threads the bilayer. Fe cation is bound by residues Glu-213, Glu-266, and His-269. The interval Glu-300–Val-329 is disordered.

This sequence belongs to the alternative oxidase family. As to quaternary structure, homodimer; disulfide-linked. It depends on Fe cation as a cofactor.

It localises to the mitochondrion inner membrane. In terms of biological role, catalyzes cyanide-resistant oxygen consumption. May increase respiration when the cytochrome respiratory pathway is restricted, or in response to low temperatures. The polypeptide is Alternative oxidase, mitochondrial (AOX) (Trypanosoma brucei brucei).